Consider the following 470-residue polypeptide: Poly(A) polymerase catalytic subunit (470 aa).

Catalysis depends on residues D192 and D194.

It belongs to the poxviridae poly(A) polymerase catalytic subunit family. As to quaternary structure, heterodimer of a large (catalytic) subunit and a small (regulatory) subunit.

The enzyme catalyses RNA(n) + ATP = RNA(n)-3'-adenine ribonucleotide + diphosphate. In terms of biological role, polymerase that creates the 3'-poly(A) tail of mRNA's. This Molluscum contagiosum virus subtype 1 (MOCV) protein is Poly(A) polymerase catalytic subunit (PAPL).